Here is a 635-residue protein sequence, read N- to C-terminus: Threonine--tRNA ligase (635 aa).

The 62-residue stretch at methionine 1 to threonine 62 folds into the TGS domain. The interval aspartate 244 to proline 535 is catalytic. 3 residues coordinate Zn(2+): cysteine 335, histidine 386, and histidine 512.

The protein belongs to the class-II aminoacyl-tRNA synthetase family. In terms of assembly, homodimer. Zn(2+) serves as cofactor.

Its subcellular location is the cytoplasm. The catalysed reaction is tRNA(Thr) + L-threonine + ATP = L-threonyl-tRNA(Thr) + AMP + diphosphate + H(+). In terms of biological role, catalyzes the attachment of threonine to tRNA(Thr) in a two-step reaction: L-threonine is first activated by ATP to form Thr-AMP and then transferred to the acceptor end of tRNA(Thr). Also edits incorrectly charged L-seryl-tRNA(Thr). The sequence is that of Threonine--tRNA ligase from Xylella fastidiosa (strain 9a5c).